The following is a 462-amino-acid chain: Integrator complex subunit 12 (462 aa).

The segment at 42-132 (GIDSSYRPSQ…PETQSSPITV (91 aa)) is disordered. Residues 59–86 (ISSTKNISIKQEPKISSSLPSGNNNGKV) show a composition bias toward polar residues. A Glycyl lysine isopeptide (Lys-Gly) (interchain with G-Cter in SUMO2) cross-link involves residue lysine 68. Basic and acidic residues predominate over residues 88–124 (TTEKVKKEAEKRPADKMKSDITEGVDIPKKPRLEKPE). Position 128 is a phosphoserine (serine 128). Residues 159–215 (GLACVVCRQMMVASGNQLVECQECHNLYHRDCHKPQVTDKEANDPRLVWYCARCTRQ) form a PHD-type zinc finger. Lysine 254 participates in a covalent cross-link: Glycyl lysine isopeptide (Lys-Gly) (interchain with G-Cter in SUMO2). Positions 301–328 (SSAGPSTAKLSSTTQNNTGKPATSSANQ) are enriched in polar residues. The interval 301–462 (SSAGPSTAKL…KKAAQKKLKK (162 aa)) is disordered. Composition is skewed to low complexity over residues 347-358 (KIGSNNSTTPTV) and 382-437 (VSKV…GPTS). Residues 449 to 462 (QMVKKKAAQKKLKK) are compositionally biased toward basic residues.

It belongs to the Integrator subunit 12 family. In terms of assembly, component of the Integrator complex, composed of core subunits INTS1, INTS2, INTS3, INTS4, INTS5, INTS6, INTS7, INTS8, INTS9/RC74, INTS10, INTS11/CPSF3L, INTS12, INTS13, INTS14 and INTS15. The core complex associates with protein phosphatase 2A subunits PPP2CA and PPP2R1A, to form the Integrator-PP2A (INTAC) complex. Post-translationally, dephosphorylated at Ser-128 by the PNUTS-PP1 complex, promoting RNA polymerase II transcription pause-release.

It is found in the nucleus. Functionally, component of the integrator complex, a multiprotein complex that terminates RNA polymerase II (Pol II) transcription in the promoter-proximal region of genes. The integrator complex provides a quality checkpoint during transcription elongation by driving premature transcription termination of transcripts that are unfavorably configured for transcriptional elongation: the complex terminates transcription by (1) catalyzing dephosphorylation of the C-terminal domain (CTD) of Pol II subunit POLR2A/RPB1 and SUPT5H/SPT5, (2) degrading the exiting nascent RNA transcript via endonuclease activity and (3) promoting the release of Pol II from bound DNA. The integrator complex is also involved in terminating the synthesis of non-coding Pol II transcripts, such as enhancer RNAs (eRNAs), small nuclear RNAs (snRNAs), telomerase RNAs and long non-coding RNAs (lncRNAs). Mediates recruitment of cytoplasmic dynein to the nuclear envelope, probably as component of the integrator complex. The polypeptide is Integrator complex subunit 12 (Homo sapiens (Human)).